A 172-amino-acid chain; its full sequence is SsrA-binding protein (172 aa).

This sequence belongs to the SmpB family.

Its subcellular location is the cytoplasm. Required for rescue of stalled ribosomes mediated by trans-translation. Binds to transfer-messenger RNA (tmRNA), required for stable association of tmRNA with ribosomes. tmRNA and SmpB together mimic tRNA shape, replacing the anticodon stem-loop with SmpB. tmRNA is encoded by the ssrA gene; the 2 termini fold to resemble tRNA(Ala) and it encodes a 'tag peptide', a short internal open reading frame. During trans-translation Ala-aminoacylated tmRNA acts like a tRNA, entering the A-site of stalled ribosomes, displacing the stalled mRNA. The ribosome then switches to translate the ORF on the tmRNA; the nascent peptide is terminated with the 'tag peptide' encoded by the tmRNA and targeted for degradation. The ribosome is freed to recommence translation, which seems to be the essential function of trans-translation. The protein is SsrA-binding protein of Dehalococcoides mccartyi (strain CBDB1).